We begin with the raw amino-acid sequence, 432 residues long: Glutamate-1-semialdehyde 2,1-aminomutase 2 (432 aa).

N6-(pyridoxal phosphate)lysine is present on Lys268.

Belongs to the class-III pyridoxal-phosphate-dependent aminotransferase family. HemL subfamily. In terms of assembly, homodimer. It depends on pyridoxal 5'-phosphate as a cofactor.

It localises to the cytoplasm. It catalyses the reaction (S)-4-amino-5-oxopentanoate = 5-aminolevulinate. Its pathway is porphyrin-containing compound metabolism; protoporphyrin-IX biosynthesis; 5-aminolevulinate from L-glutamyl-tRNA(Glu): step 2/2. This Listeria monocytogenes serovar 1/2a (strain ATCC BAA-679 / EGD-e) protein is Glutamate-1-semialdehyde 2,1-aminomutase 2.